Here is a 173-residue protein sequence, read N- to C-terminus: MSRSKVFFDITIGGKASGRIVMELYDDVVPKTAGNFRALCTGENGIGKSGKPLHFKGSKFHRIIPNFMIQGGDFTRGNGTGGESIYGEKFPDENFKEKHTGPGVLSMANAGPNTNGSQFFLCTVKTEWLDGKHVVFGRVVEGLDVVKAVESNGSQSGKPVKDCMIADCGQLKA.

The PPIase cyclophilin-type domain occupies phenylalanine 7–glutamine 170.

The protein belongs to the cyclophilin-type PPIase family. In terms of tissue distribution, exclusively expressed in the single anterior excretory cell.

The catalysed reaction is [protein]-peptidylproline (omega=180) = [protein]-peptidylproline (omega=0). Catalyzes the cis-trans isomerization of proline imidic peptide bonds in oligopeptides. Plays a role in protein folding, transport and assembly. The protein is Peptidyl-prolyl cis-trans isomerase 3 (cyn-3) of Caenorhabditis elegans.